The chain runs to 272 residues: 3-methyl-2-oxobutanoate hydroxymethyltransferase (272 aa).

Mg(2+) is bound by residues aspartate 54 and aspartate 93. 3-methyl-2-oxobutanoate is bound by residues 54–55, aspartate 93, and lysine 121; that span reads DS. Glutamate 123 contacts Mg(2+). Glutamate 190 functions as the Proton acceptor in the catalytic mechanism.

Belongs to the PanB family. As to quaternary structure, homodecamer; pentamer of dimers. It depends on Mg(2+) as a cofactor.

The protein localises to the cytoplasm. The catalysed reaction is 3-methyl-2-oxobutanoate + (6R)-5,10-methylene-5,6,7,8-tetrahydrofolate + H2O = 2-dehydropantoate + (6S)-5,6,7,8-tetrahydrofolate. It participates in cofactor biosynthesis; (R)-pantothenate biosynthesis; (R)-pantoate from 3-methyl-2-oxobutanoate: step 1/2. In terms of biological role, catalyzes the reversible reaction in which hydroxymethyl group from 5,10-methylenetetrahydrofolate is transferred onto alpha-ketoisovalerate to form ketopantoate. The polypeptide is 3-methyl-2-oxobutanoate hydroxymethyltransferase (Janthinobacterium sp. (strain Marseille) (Minibacterium massiliensis)).